A 270-amino-acid chain; its full sequence is Inositol monophosphatase (270 aa).

Mg(2+)-binding residues include Glu-71, Asp-91, Leu-93, and Asp-94. Residue Glu-71 participates in substrate binding. Substrate is bound by residues 93 to 96, 194 to 196, Glu-213, and Asp-221; these read LDGT and GSC. Mg(2+) is bound at residue Asp-221.

The protein belongs to the inositol monophosphatase superfamily. Requires Mg(2+) as cofactor.

It carries out the reaction a myo-inositol phosphate + H2O = myo-inositol + phosphate. It functions in the pathway polyol metabolism; myo-inositol biosynthesis; myo-inositol from D-glucose 6-phosphate: step 2/2. Inhibited by Li(+). In terms of biological role, responsible for the provision of inositol required for synthesis of phosphatidylinositol and polyphosphoinositides. The protein is Inositol monophosphatase (IMP1) of Mesembryanthemum crystallinum (Common ice plant).